We begin with the raw amino-acid sequence, 158 residues long: NAD(P)H-quinone oxidoreductase subunit J, chloroplastic (158 aa).

This sequence belongs to the complex I 30 kDa subunit family. In terms of assembly, NDH is composed of at least 16 different subunits, 5 of which are encoded in the nucleus.

Its subcellular location is the plastid. The protein localises to the chloroplast thylakoid membrane. The enzyme catalyses a plastoquinone + NADH + (n+1) H(+)(in) = a plastoquinol + NAD(+) + n H(+)(out). It carries out the reaction a plastoquinone + NADPH + (n+1) H(+)(in) = a plastoquinol + NADP(+) + n H(+)(out). NDH shuttles electrons from NAD(P)H:plastoquinone, via FMN and iron-sulfur (Fe-S) centers, to quinones in the photosynthetic chain and possibly in a chloroplast respiratory chain. The immediate electron acceptor for the enzyme in this species is believed to be plastoquinone. Couples the redox reaction to proton translocation, and thus conserves the redox energy in a proton gradient. This Oenothera argillicola (Appalachian evening primrose) protein is NAD(P)H-quinone oxidoreductase subunit J, chloroplastic.